A 598-amino-acid chain; its full sequence is MMFCKLLRCQNGIASKRAALSLKGFKTSSINLVEKKLNKYSETITGPKSQGASQAMLYATGLNEEDMKKPQVGIASCWYEGNPCNMHLLDLGRRVKEGVKKAGLTGFQFNTIGVSDGISMGTTGMRYSLQSREIIADSIETVMQGQWYDANVSIPGCDKNMPGCLIAMGRFNRPSIMVYGGSIRAGHSPCQNNAPIDIVSAFQSYGEFITGKIDEPTRHDIIRHACPGGGACGGMYTANTMASCAEAMGMTLPGSSSYLAGSPEKFAECEAAGSAIKRLLVDDIKPRDIMTRSAFENAMVLTMTLGGSTNSVLHLIAIAKSVGITLTLDDFQAVSNRTPFIADMKPSGKYVMEDLFAIGGIPSVLKYLHAEGLIDGSNITVTGKTLAENLRGFKDLAEGQKIIRPLSNPIKTEGHLRVLRGSLAPEGSVAKITGKEGLNFTGKARVFDAENDFIAALERGEFKKGEKTVVIIRFEGPKGGPGMPEMLKPSSAIMGAGLGKDVALLTDGRFSGGSHGFLIGHVDPEAQVGGPIALVQDGDVIEINAVKNTLDLMVDEKEMARRRSVWKAPPLKYQQGTLLKYARNVSTASKGAVTDSLE.

The transit peptide at 1-18 directs the protein to the mitochondrion; sequence MMFCKLLRCQNGIASKRA. Residue C84 participates in [2Fe-2S] cluster binding. Residue D116 coordinates Mg(2+). C157 is a [2Fe-2S] cluster binding site. D158 lines the Mg(2+) pocket. C232 lines the [2Fe-2S] cluster pocket. E485 is a Mg(2+) binding site. Catalysis depends on S511, which acts as the Proton acceptor.

The protein belongs to the IlvD/Edd family. The cofactor is [2Fe-2S] cluster. It depends on Mg(2+) as a cofactor.

The protein resides in the mitochondrion. It catalyses the reaction (2R)-2,3-dihydroxy-3-methylbutanoate = 3-methyl-2-oxobutanoate + H2O. The catalysed reaction is (2R,3R)-2,3-dihydroxy-3-methylpentanoate = (S)-3-methyl-2-oxopentanoate + H2O. It functions in the pathway amino-acid biosynthesis; L-isoleucine biosynthesis; L-isoleucine from 2-oxobutanoate: step 3/4. It participates in amino-acid biosynthesis; L-valine biosynthesis; L-valine from pyruvate: step 3/4. In terms of biological role, dihydroxyacid dehydratase that catalyzes the third step in the common pathway leading to biosynthesis of branched-chain amino acids. Catalyzes the dehydration of (2R,3R)-2,3-dihydroxy-3-methylpentanoate (2,3-dihydroxy-3-methylvalerate) into 2-oxo-3-methylpentanoate (2-oxo-3-methylvalerate) and of (2R)-2,3-dihydroxy-3-methylbutanoate (2,3-dihydroxyisovalerate) into 2-oxo-3-methylbutanoate (2-oxoisovalerate), the penultimate precursor to L-isoleucine and L-valine, respectively. The chain is Dihydroxy-acid dehydratase, mitochondrial from Schizosaccharomyces pombe (strain 972 / ATCC 24843) (Fission yeast).